A 263-amino-acid chain; its full sequence is 4-hydroxy-2-oxo-heptane-1,7-dioate aldolase (263 aa).

Histidine 45 serves as the catalytic Proton acceptor. A substrate-binding site is contributed by glutamine 147. Glutamate 149 is an a divalent metal cation binding site. Positions 174 and 175 each coordinate substrate. Aspartate 175 is a binding site for a divalent metal cation.

Belongs to the HpcH/HpaI aldolase family. Homohexamer; trimer of dimers. A divalent metal cation serves as cofactor.

The enzyme catalyses 4-hydroxy-2-oxoheptanedioate = succinate semialdehyde + pyruvate. It participates in aromatic compound metabolism; 4-hydroxyphenylacetate degradation; pyruvate and succinate semialdehyde from 4-hydroxyphenylacetate: step 7/7. Catalyzes the reversible retro-aldol cleavage of 4-hydroxy-2-ketoheptane-1,7-dioate (HKHD) to pyruvate and succinic semialdehyde. This Salmonella arizonae (strain ATCC BAA-731 / CDC346-86 / RSK2980) protein is 4-hydroxy-2-oxo-heptane-1,7-dioate aldolase.